A 72-amino-acid polypeptide reads, in one-letter code: Late effector protein 1 (72 aa).

Positions 1-22 (MKCYLVVVVAALCTLVAQGSVG) are cleaved as a signal peptide. A glycan (N-linked (GlcNAc...) asparagine) is linked at Asn66.

This sequence belongs to the lep1 family. Interacts at the cell wall with secreted rep1 repellent peptides.

The protein localises to the secreted. It is found in the cell wall. Core effector contributing to spore formation and tumor formation at the host plant. Modulates surface hydrophobicity promoting cell-cell or cell-surface contacts. Lep1 and rep1 interact in aerial hyphae to form a strong hydrophobic layer. Plays a crucial role in hyphal aggregation that might be a prerequisite for strong proliferation of diploid cells and for induction of the morphological changes associated with spore formation. The sequence is that of Late effector protein 1 from Sporisorium reilianum (strain SRZ2) (Maize head smut fungus).